The chain runs to 674 residues: DNA mismatch repair protein MutL (674 aa).

The protein belongs to the DNA mismatch repair MutL/HexB family.

This protein is involved in the repair of mismatches in DNA. It is required for dam-dependent methyl-directed DNA mismatch repair. May act as a 'molecular matchmaker', a protein that promotes the formation of a stable complex between two or more DNA-binding proteins in an ATP-dependent manner without itself being part of a final effector complex. The polypeptide is DNA mismatch repair protein MutL (Clostridium perfringens (strain ATCC 13124 / DSM 756 / JCM 1290 / NCIMB 6125 / NCTC 8237 / Type A)).